Consider the following 160-residue polypeptide: MCGLGIVPMVKPALFGMLILVIGTSTVQAEECWSLLNTPDWSKIKAAIEQIKVCEALPEGPNRTRRFEATQIDICSAPEGFRVRSKVEVTCATSDAAFIRFSVKGAVTPDVTVDVGACRITSLDLDVSGDVGEYLSGLGLLQPVLRGWAQEQLNRICGKA.

The signal sequence occupies residues 1–29 (MCGLGIVPMVKPALFGMLILVIGTSTVQA).

This is an uncharacterized protein from Sinorhizobium fredii (strain NBRC 101917 / NGR234).